Here is a 358-residue protein sequence, read N- to C-terminus: Fructose-bisphosphate aldolase (358 aa).

Ser-62 provides a ligand contact to D-glyceraldehyde 3-phosphate. The active-site Proton donor is Asp-109. Zn(2+) contacts are provided by His-110, Asp-144, Glu-174, and His-226. Gly-227 provides a ligand contact to dihydroxyacetone phosphate. His-264 serves as a coordination point for Zn(2+). Dihydroxyacetone phosphate is bound by residues 265-267 (GGS) and 286-289 (NIDT).

The protein belongs to the class II fructose-bisphosphate aldolase family. Requires Zn(2+) as cofactor.

It carries out the reaction beta-D-fructose 1,6-bisphosphate = D-glyceraldehyde 3-phosphate + dihydroxyacetone phosphate. It functions in the pathway carbohydrate degradation; glycolysis; D-glyceraldehyde 3-phosphate and glycerone phosphate from D-glucose: step 4/4. Functionally, catalyzes the aldol condensation of dihydroxyacetone phosphate (DHAP or glycerone-phosphate) with glyceraldehyde 3-phosphate (G3P) to form fructose 1,6-bisphosphate (FBP) in gluconeogenesis and the reverse reaction in glycolysis. The sequence is that of Fructose-bisphosphate aldolase (fba) from Edwardsiella ictaluri (strain 93-146).